The sequence spans 149 residues: Probable conjugal transfer protein TrbE part 1 (149 aa).

Belongs to the TrbE/VirB4 family.

The chain is Probable conjugal transfer protein TrbE part 1 (trbEA) from Sinorhizobium fredii (strain NBRC 101917 / NGR234).